A 200-amino-acid polypeptide reads, in one-letter code: dTDP-4-dehydrorhamnose 3,5-epimerase (200 aa).

Residues arginine 21, glutamate 26, 45–47, and arginine 57 contribute to the substrate site; that span reads QVN. Catalysis depends on histidine 60, which acts as the Proton acceptor. Residues lysine 70 and histidine 116 each coordinate substrate. The Proton donor role is filled by tyrosine 129. The substrate site is built by glutamate 140 and lysine 165.

The protein belongs to the dTDP-4-dehydrorhamnose 3,5-epimerase family.

It catalyses the reaction dTDP-4-dehydro-6-deoxy-alpha-D-glucose = dTDP-4-dehydro-beta-L-rhamnose. It functions in the pathway carbohydrate biosynthesis; dTDP-L-rhamnose biosynthesis. It participates in antibiotic biosynthesis; streptomycin biosynthesis. Involved in the biosynthesis of the dihydrostreptose moiety of streptomycin. Catalyzes the epimerization of the C3' and C5'positions of dTDP-6-deoxy-D-xylo-4-hexulose, forming dTDP-6-deoxy-L-lyxo-4-hexulose. The polypeptide is dTDP-4-dehydrorhamnose 3,5-epimerase (Streptomyces griseus).